Here is a 286-residue protein sequence, read N- to C-terminus: Cytochrome c oxidase subunit 3 (286 aa).

The next 8 helical transmembrane spans lie at 13–33 (GVFLFLSYTPLYITYLLGVVI), 40–60 (VGTFAITLDIILCILVVCFLI), 85–105 (IIQYCFLWFVFSEFMLFVVFF), 133–153 (IILDLGYIFYWFLFDFFNIIL), 173–195 (LCREYLLSKIILGSSIFLGLLFI), 199–221 (VWEFNILIITLSVNIFCTILFSI), 223–243 (TLHFMHVLVGIVFMIISIFNI), and 253–273 (IVLIVCIIFYWHFVDIVWFFL).

It belongs to the cytochrome c oxidase subunit 3 family. In terms of assembly, component of the cytochrome c oxidase (complex IV, CIV), a multisubunit enzyme composed of a catalytic core of 3 subunits and several supernumerary subunits. The complex exists as a monomer or a dimer and forms supercomplexes (SCs) in the inner mitochondrial membrane with ubiquinol-cytochrome c oxidoreductase (cytochrome b-c1 complex, complex III, CIII).

Its subcellular location is the mitochondrion inner membrane. It catalyses the reaction 4 Fe(II)-[cytochrome c] + O2 + 8 H(+)(in) = 4 Fe(III)-[cytochrome c] + 2 H2O + 4 H(+)(out). Functionally, component of the cytochrome c oxidase, the last enzyme in the mitochondrial electron transport chain which drives oxidative phosphorylation. The respiratory chain contains 3 multisubunit complexes succinate dehydrogenase (complex II, CII), ubiquinol-cytochrome c oxidoreductase (cytochrome b-c1 complex, complex III, CIII) and cytochrome c oxidase (complex IV, CIV), that cooperate to transfer electrons derived from NADH and succinate to molecular oxygen, creating an electrochemical gradient over the inner membrane that drives transmembrane transport and the ATP synthase. Cytochrome c oxidase is the component of the respiratory chain that catalyzes the reduction of oxygen to water. Electrons originating from reduced cytochrome c in the intermembrane space (IMS) are transferred via the dinuclear copper A center (CU(A)) of subunit 2 and heme A of subunit 1 to the active site in subunit 1, a binuclear center (BNC) formed by heme A3 and copper B (CU(B)). The BNC reduces molecular oxygen to 2 water molecules using 4 electrons from cytochrome c in the IMS and 4 protons from the mitochondrial matrix. In Trypanoplasma borreli, this protein is Cytochrome c oxidase subunit 3 (COIII).